Reading from the N-terminus, the 71-residue chain is UPF0346 protein SUB0487 (71 aa).

The protein belongs to the UPF0346 family.

The sequence is that of UPF0346 protein SUB0487 from Streptococcus uberis (strain ATCC BAA-854 / 0140J).